Here is a 202-residue protein sequence, read N- to C-terminus: Transcription factor MUTE (202 aa).

The 49-residue stretch at 1 to 49 folds into the bHLH domain; that stretch reads MSHIAVERNRRRQMNEHLKSLRSLTPCFYIKRGDQASIIGGVIEFIKEL.

In terms of assembly, homodimer. As to expression, leaf epidermis and flowers.

The protein resides in the nucleus. Its function is as follows. Transcription factor. Together with FMA and SPCH, regulates the stomata formation. Required for the differentiation of stomatal guard cells, by promoting successive asymmetric cell divisions and the formation of guard mother cells. Promotes the conversion of the leaf epidermis into stomata. This chain is Transcription factor MUTE (MUTE), found in Arabidopsis thaliana (Mouse-ear cress).